The following is a 417-amino-acid chain: Protein translocase subunit SecD (417 aa).

6 helical membrane-spanning segments follow: residues 9–29, 236–256, 258–278, 288–308, 333–353, and 360–380; these read LLVS…PLVS, ASMK…LLYY, LSGL…LAVM, PGMA…VLIF, FTTI…LFYL, and GFAV…VTVT.

Belongs to the SecD/SecF family. SecD subfamily. In terms of assembly, forms a complex with SecF. Part of the essential Sec protein translocation apparatus which comprises SecA, SecYEG and auxiliary proteins SecDF. Other proteins may also be involved.

It is found in the cell membrane. Functionally, part of the Sec protein translocase complex. Interacts with the SecYEG preprotein conducting channel. SecDF uses the proton motive force (PMF) to complete protein translocation after the ATP-dependent function of SecA. The protein is Protein translocase subunit SecD of Acidaminococcus fermentans (strain ATCC 25085 / DSM 20731 / CCUG 9996 / CIP 106432 / VR4).